Consider the following 514-residue polypeptide: tRNA-2-methylthio-N(6)-dimethylallyladenosine synthase (514 aa).

The interval methionine 1–alanine 21 is disordered. One can recognise an MTTase N-terminal domain in the interval arginine 68–leucine 186. [4Fe-4S] cluster-binding residues include cysteine 77, cysteine 113, cysteine 147, cysteine 223, cysteine 227, and cysteine 230. Positions arginine 209–alanine 440 constitute a Radical SAM core domain. Positions serine 442–lysine 505 constitute a TRAM domain.

The protein belongs to the methylthiotransferase family. MiaB subfamily. As to quaternary structure, monomer. The cofactor is [4Fe-4S] cluster.

The protein localises to the cytoplasm. It carries out the reaction N(6)-dimethylallyladenosine(37) in tRNA + (sulfur carrier)-SH + AH2 + 2 S-adenosyl-L-methionine = 2-methylsulfanyl-N(6)-dimethylallyladenosine(37) in tRNA + (sulfur carrier)-H + 5'-deoxyadenosine + L-methionine + A + S-adenosyl-L-homocysteine + 2 H(+). In terms of biological role, catalyzes the methylthiolation of N6-(dimethylallyl)adenosine (i(6)A), leading to the formation of 2-methylthio-N6-(dimethylallyl)adenosine (ms(2)i(6)A) at position 37 in tRNAs that read codons beginning with uridine. The chain is tRNA-2-methylthio-N(6)-dimethylallyladenosine synthase from Staphylococcus aureus (strain USA300 / TCH1516).